The following is a 123-amino-acid chain: rRNA-processing protein cgr-1 (123 aa).

Residues 1-13 (MSSTTTTTQTTSQ) are compositionally biased toward low complexity. Disordered regions lie at residues 1–47 (MSST…GLTS) and 85–123 (EKRA…LINS). A coiled-coil region spans residues 49–110 (EKRAKERQLL…EKMHKKRVER (62 aa)). Basic and acidic residues predominate over residues 85 to 102 (EKRAKKEEKERYEKMAEK). A compositionally biased stretch (basic residues) spans 103–123 (MHKKRVERLKRKEKRNKLINS).

This sequence belongs to the CGR1 family.

It localises to the nucleus. Its subcellular location is the nucleolus. Its function is as follows. Involved in nucleolar integrity and required for processing of the pre-rRNA for the 60S ribosome subunit. The sequence is that of rRNA-processing protein cgr-1 (cgr-1) from Neurospora crassa (strain ATCC 24698 / 74-OR23-1A / CBS 708.71 / DSM 1257 / FGSC 987).